We begin with the raw amino-acid sequence, 340 residues long: Lipopolysaccharide heptosyltransferase 3 (340 aa).

Belongs to the glycosyltransferase 9 family.

The catalysed reaction is an L-alpha-D-Hep-(1-&gt;3)-4-O-phospho-L-alpha-D-Hep-(1-&gt;5)-[alpha-Kdo-(2-&gt;4)]-alpha-Kdo-(2-&gt;6)-lipid A + ADP-L-glycero-beta-D-manno-heptose = an L-alpha-D-Hep-(1-&gt;7)-L-alpha-D-Hep-(1-&gt;3)-4-O-phospho-L-alpha-D-Hep-(1-&gt;5)-[alpha-Kdo-(2-&gt;4)]-alpha-Kdo-(2-&gt;6)-lipid A + ADP + H(+). It carries out the reaction L-alpha-D-Hep-(1-&gt;3)-4-O-phospho-L-alpha-D-Hep-(1-&gt;5)-[alpha-Kdo-(2-&gt;4)]-alpha-Kdo-(2-&gt;6)-lipid A (E. coli) + ADP-L-glycero-beta-D-manno-heptose = L-alpha-D-Hep-(1-&gt;7)-L-alpha-D-Hep-(1-&gt;3)-4-O-phospho-L-alpha-D-Hep-(1-&gt;5)-[alpha-Kdo-(2-&gt;4)]-alpha-Kdo-(2-&gt;6)-lipid A (E. coli) + ADP + H(+). Its pathway is bacterial outer membrane biogenesis; LPS core biosynthesis. Functionally, glycosyltransferase involved in the biosynthesis of the core oligosaccharide region of lipopolysaccharide (LPS). Catalyzes the addition of the third heptose unit (HepIII) to the second heptose unit (HepII) of the phospho-Hep2-Kdo2-lipid A module. The transfer of HepIII seems to be a prerequisite to the phosphorylation of the second heptose unit. The sequence is that of Lipopolysaccharide heptosyltransferase 3 from Escherichia coli.